The following is a 173-amino-acid chain: MDVTIQHPWFKRALGPFYPSRLFDQFFGEGLFEYDLLPFLSSTISPYYRQSLFRTVLDSGISEVRSDRDKFVIFLDVKHFSPEDLTVKVQEDFVEIHGKHSERQDDHGYISREFHRRYRLPSNVDQSALSCSLSADGMLTFSGPKVQSGLDAGHSERAIPVSREEKPSSAPSS.

Met1 is subject to N-acetylmethionine. The tract at residues 1 to 63 (MDVTIQHPWF…RTVLDSGISE (63 aa)) is required for complex formation with BFSP1 and BFSP2. A Deamidated glutamine; partial modification is found at Gln6. A Phosphoserine modification is found at Ser45. At Gln50 the chain carries Deamidated glutamine; partial. The 111-residue stretch at 52 to 162 (LFRTVLDSGI…GHSERAIPVS (111 aa)) folds into the sHSP domain. Lys70 bears the N6-acetyllysine mark. The residue at position 90 (Gln90) is a Deamidated glutamine; partial. At Lys99 the chain carries N6-acetyllysine. The Zn(2+) site is built by His100, Glu102, and His107. Ser122 carries the post-translational modification Phosphoserine. Residue Asn123 is modified to Deamidated asparagine; partial. The interval 145–173 (KVQSGLDAGHSERAIPVSREEKPSSAPSS) is disordered. Gln147 bears the Deamidated glutamine; partial mark. Positions 153 to 167 (GHSERAIPVSREEKP) are enriched in basic and acidic residues. His154 is a Zn(2+) binding site. O-linked (GlcNAc) serine glycosylation occurs at Ser162.

This sequence belongs to the small heat shock protein (HSP20) family. In terms of assembly, heteromer composed of three CRYAA and one CRYAB subunits. Inter-subunit bridging via zinc ions enhances stability, which is crucial as there is no protein turn over in the lens. Can also form homodimers and homotetramers (dimers of dimers) which serve as the building blocks of homooligomers. Within homooligomers, the zinc-binding motif is created from residues of 3 different molecules. His-100 and Glu-102 from one molecule are ligands of the zinc ion, and His-107 and His-154 residues from additional molecules complete the site with tetrahedral coordination geometry. Part of a complex required for lens intermediate filament formation composed of BFSP1, BFSP2 and CRYAA. In terms of processing, acetylation at Lys-70 may increase chaperone activity. Post-translationally, undergoes age-dependent proteolytical cleavage at the C-terminus.

It is found in the cytoplasm. It localises to the nucleus. In terms of biological role, contributes to the transparency and refractive index of the lens. Acts as a chaperone, preventing aggregation of various proteins under a wide range of stress conditions. Required for the correct formation of lens intermediate filaments as part of a complex composed of BFSP1, BFSP2 and CRYAA. The chain is Alpha-crystallin A chain (CRYAA) from Ochotona princeps (Southern American pika).